The following is a 298-amino-acid chain: Lipoyl synthase (298 aa).

Cys-40, Cys-45, Cys-51, Cys-67, Cys-71, Cys-74, and Ser-280 together coordinate [4Fe-4S] cluster. The Radical SAM core domain maps to 53–269 (AVRRTATFMI…KEIAMAKGFS (217 aa)).

The protein belongs to the radical SAM superfamily. Lipoyl synthase family. Requires [4Fe-4S] cluster as cofactor.

It is found in the cytoplasm. It carries out the reaction [[Fe-S] cluster scaffold protein carrying a second [4Fe-4S](2+) cluster] + N(6)-octanoyl-L-lysyl-[protein] + 2 oxidized [2Fe-2S]-[ferredoxin] + 2 S-adenosyl-L-methionine + 4 H(+) = [[Fe-S] cluster scaffold protein] + N(6)-[(R)-dihydrolipoyl]-L-lysyl-[protein] + 4 Fe(3+) + 2 hydrogen sulfide + 2 5'-deoxyadenosine + 2 L-methionine + 2 reduced [2Fe-2S]-[ferredoxin]. It functions in the pathway protein modification; protein lipoylation via endogenous pathway; protein N(6)-(lipoyl)lysine from octanoyl-[acyl-carrier-protein]. In terms of biological role, catalyzes the radical-mediated insertion of two sulfur atoms into the C-6 and C-8 positions of the octanoyl moiety bound to the lipoyl domains of lipoate-dependent enzymes, thereby converting the octanoylated domains into lipoylated derivatives. The chain is Lipoyl synthase from Bacillus pumilus (strain SAFR-032).